The chain runs to 868 residues: MSTWPIDAISKKPSVSLDYGIIGACQLLNPSGYHRAEKVENNEWTFARYDSYTGVELVDLDKRWDILSLNPNYKLPKLTELPAEATNSTRKATSSSFGLSVCRYVPRNLFSTLAKESQLASSAESIYNPHILNTFCLGKTAPSDKNRYTTTECLACSKISNETAENLLFLCLSSPWIFRASPTLQNTATFEEFPFYLNVSAFEFAEDPIWKFSQPVRQLVFSNGEPSLLFALSSCELVIFQVTYDLMFLDEPNTPGCLSAIPLRFLYADDVYNSDSFANVSVHPTDNSFFLTTSSSGRWTIWQFLDDGYRECFGSSFKESLQQALCSAPTSSIAYHEEEINPDNTIYRAKWEEYFGGVILHNAFFILHVSLGEVPDFHLLFHCSSDVRILQVVNESMPIKSEFFILTTESVLWMDIQHPQKPLLEWKHNRKLDPTLKITVTATFSQNIYVSVYSQMNGVVQQIHFSKDRALPVSGSHPFLLLNEVQVPIRSLIIQPCYFFESSEFDRQGPFDSPFWSAIIDKADGSLSLHILCEKSSLKIYNLEELTGSSQVAMKFKTITPSVNTSEDDSANDQEIISTPNSDFQQLSLSRLYHVLCSNRNKKNTITLDEFASKVPDFVEAFDSINHDVIITLSELYDGFPLKGTFTNVAEIISHLEGTELSFYFPYMFGINYNNASFFYTSVDSIASLIHRRWESNTDKSVEIPCFQSSQRRSIKNVIHYLFLSSIGVSREKIFDPSLSRKEIDSTDLLTFIKPFYDTEGLELNEDVRNILENWEIGKISSTYVIGDSAVETEDPSSSQFSDFYISQQQSSVLPSSQIATVFSQEDVPNFSSLYSESSSQTIPIMSQVVSGKYGSRPSKKKKKRSGF.

It is found in the cytoplasm. It localises to the nucleus. This is an uncharacterized protein from Schizosaccharomyces pombe (strain 972 / ATCC 24843) (Fission yeast).